The chain runs to 218 residues: uncharacterized protein (218 aa).

The region spanning 7–123 (RVALADDQPL…ELIDAIRAAA (117 aa)) is the Response regulatory domain. The residue at position 58 (D58) is a 4-aspartylphosphate. One can recognise an HTH luxR-type domain in the interval 150-215 (AEELAEPFTK…QAVVFAIRNG (66 aa)). Residues 174–193 (NEDIAEKLFVSESTVKTHVH) constitute a DNA-binding region (H-T-H motif).

Post-translationally, phosphorylated by YxjM.

The protein resides in the cytoplasm. In terms of biological role, probable member of the two-component regulatory system YxjM/YxjL. This is an uncharacterized protein from Bacillus subtilis (strain 168).